A 466-amino-acid polypeptide reads, in one-letter code: Phosphomethylpyrimidine synthase (466 aa).

Substrate is bound by residues N80, M109, Y139, H175, 195–197 (SRG), 236–239 (DSLR), and E275. Position 279 (H279) interacts with Zn(2+). Residue Y302 coordinates substrate. H343 serves as a coordination point for Zn(2+). Residues C423, C426, and C431 each coordinate [4Fe-4S] cluster.

This sequence belongs to the ThiC family. [4Fe-4S] cluster serves as cofactor.

The enzyme catalyses 5-amino-1-(5-phospho-beta-D-ribosyl)imidazole + S-adenosyl-L-methionine = 4-amino-2-methyl-5-(phosphooxymethyl)pyrimidine + CO + 5'-deoxyadenosine + formate + L-methionine + 3 H(+). It participates in cofactor biosynthesis; thiamine diphosphate biosynthesis. Its function is as follows. Catalyzes the synthesis of the hydroxymethylpyrimidine phosphate (HMP-P) moiety of thiamine from aminoimidazole ribotide (AIR) in a radical S-adenosyl-L-methionine (SAM)-dependent reaction. The protein is Phosphomethylpyrimidine synthase of Prochlorococcus marinus (strain NATL2A).